Here is a 220-residue protein sequence, read N- to C-terminus: Charged multivesicular body protein 2a (220 aa).

2 coiled-coil regions span residues 12–53 (EELL…MAKQ) and 198–219 (EATA…NLRR). Positions 196–220 (KGEATAALADADADLEERLNNLRRD) are disordered. Residues 208 to 218 (ADLEERLNNLR) carry the MIT-interacting motif motif. Over residues 211 to 220 (EERLNNLRRD) the composition is skewed to basic and acidic residues.

Belongs to the SNF7 family. Probable core component of the endosomal sorting required for transport complex III (ESCRT-III). ESCRT-III components are thought to multimerize to form a flat lattice on the perimeter membrane of the endosome.

The protein localises to the late endosome membrane. It localises to the cytoplasm. Probable core component of the endosomal sorting required for transport complex III (ESCRT-III) which is involved in multivesicular bodies (MVBs) formation and sorting of endosomal cargo proteins into MVBs. MVBs contain intraluminal vesicles (ILVs) that are generated by invagination and scission from the limiting membrane of the endosome and mostly are delivered to lysosomes enabling degradation of membrane proteins, such as stimulated growth factor receptors, lysosomal enzymes and lipids. The sequence is that of Charged multivesicular body protein 2a (chmp2a) from Xenopus laevis (African clawed frog).